Here is a 127-residue protein sequence, read N- to C-terminus: Protein FAM229A (127 aa).

Positions 1–96 (MLPSSTPGPG…ATEHNPVRPL (96 aa)) are disordered. Residues 24 to 39 (RSPAARAPAAASSLGP) are compositionally biased toward low complexity.

This sequence belongs to the FAM229 family.

The polypeptide is Protein FAM229A (FAM229A) (Homo sapiens (Human)).